The following is a 410-amino-acid chain: Cytochrome P450 (410 aa).

A heme-binding site is contributed by Cys359.

This sequence belongs to the cytochrome P450 family. The cofactor is heme.

The chain is Cytochrome P450 (cypA) from Bacillus subtilis (strain 168).